The following is a 176-amino-acid chain: Large ribosomal subunit protein uL6 (176 aa).

Belongs to the universal ribosomal protein uL6 family. In terms of assembly, part of the 50S ribosomal subunit.

In terms of biological role, this protein binds to the 23S rRNA, and is important in its secondary structure. It is located near the subunit interface in the base of the L7/L12 stalk, and near the tRNA binding site of the peptidyltransferase center. This chain is Large ribosomal subunit protein uL6, found in Burkholderia thailandensis (strain ATCC 700388 / DSM 13276 / CCUG 48851 / CIP 106301 / E264).